Consider the following 644-residue polypeptide: Forkhead box protein O (644 aa).

Positions 39-75 are disordered; that stretch reads FEPQTRARSNTWPCPRPENFVEPPDELDSTKASNQQL. T49 bears the Phosphothreonine; by PKB/AKT1 mark. S80 carries the post-translational modification Phosphoserine. Residues 100 to 206 constitute a DNA-binding region (fork-head); the sequence is WGNLSYADLI…ETSRYEKRRG (107 aa). Disordered regions lie at residues 187–210, 222–276, 329–386, 412–435, and 578–612; these read KSVRRRAASMETSRYEKRRGRAKK, GLND…SPIR, QQQQ…QTLQ, SPNSVTTTMSPAYPNSEPSSDSLN, and QQHLQQQQQHHQHQQQLLLNNNNNNNNNNSSNSSL. S195 is subject to Phosphoserine; by PKB/AKT1. Composition is skewed to polar residues over residues 226–235 and 261–270; these read ATPSPSSSVS and RASSNASSCG. The residue at position 264 (S264) is a Phosphoserine; by PKB/AKT1. Phosphoserine occurs at positions 267, 268, and 273. A compositionally biased stretch (low complexity) spans 329–340; it reads QQQQQQQQQQQQ. Pro residues predominate over residues 350–359; it reads SQPPPPPYQP. A compositionally biased stretch (low complexity) spans 360–374; the sequence is PQLQQQQQQQPSYSL. Positions 412 to 421 are enriched in polar residues; the sequence is SPNSVTTTMS.

As to quaternary structure, interacts with melt.

Its subcellular location is the cytoplasm. The protein resides in the nucleus. Functionally, transcription factor involved in the regulation of the insulin signaling pathway. Consistently activates both the downstream target Thor\d4EBP and the feedback control target InR. Involved in negative regulation of the cell cycle, modulating cell growth and proliferation. In response to cellular stresses, such as nutrient deprivation or increased levels of reactive oxygen species, foxo is activated and inhibits growth through the action of target genes such as Thor. Foxo activated in the adult fat body can regulate lifespan in adults; an insulin peptide itself may function as one secondary messenger of insulin-regulated aging. Also regulates Lip4, homolog of human acid lipases, thereby acting as a key modulator of lipid metabolism by insulin signaling and integrates insulin responses to glucose and lipid homeostasis. The polypeptide is Forkhead box protein O (Drosophila pseudoobscura pseudoobscura (Fruit fly)).